Reading from the N-terminus, the 332-residue chain is UDP-3-O-acylglucosamine N-acyltransferase (332 aa).

His235 acts as the Proton acceptor in catalysis.

This sequence belongs to the transferase hexapeptide repeat family. LpxD subfamily. Homotrimer.

The catalysed reaction is a UDP-3-O-[(3R)-3-hydroxyacyl]-alpha-D-glucosamine + a (3R)-hydroxyacyl-[ACP] = a UDP-2-N,3-O-bis[(3R)-3-hydroxyacyl]-alpha-D-glucosamine + holo-[ACP] + H(+). It functions in the pathway bacterial outer membrane biogenesis; LPS lipid A biosynthesis. Its function is as follows. Catalyzes the N-acylation of UDP-3-O-acylglucosamine using 3-hydroxyacyl-ACP as the acyl donor. Is involved in the biosynthesis of lipid A, a phosphorylated glycolipid that anchors the lipopolysaccharide to the outer membrane of the cell. The protein is UDP-3-O-acylglucosamine N-acyltransferase of Fusobacterium nucleatum subsp. nucleatum (strain ATCC 25586 / DSM 15643 / BCRC 10681 / CIP 101130 / JCM 8532 / KCTC 2640 / LMG 13131 / VPI 4355).